Consider the following 462-residue polypeptide: Trigger factor (462 aa).

The PPIase FKBP-type domain occupies 161-246 (GDVVVIDFVG…VKEVRAPKAA (86 aa)). Residues 428–437 (SVEDLRKDPD) are compositionally biased toward basic and acidic residues. The interval 428–462 (SVEDLRKDPDEASADGEAAPAKPKKKAAAKKKAAE) is disordered. Over residues 449–462 (KPKKKAAAKKKAAE) the composition is skewed to basic residues.

Belongs to the FKBP-type PPIase family. Tig subfamily.

The protein localises to the cytoplasm. It carries out the reaction [protein]-peptidylproline (omega=180) = [protein]-peptidylproline (omega=0). Functionally, involved in protein export. Acts as a chaperone by maintaining the newly synthesized protein in an open conformation. Functions as a peptidyl-prolyl cis-trans isomerase. The polypeptide is Trigger factor (Paramagnetospirillum magneticum (strain ATCC 700264 / AMB-1) (Magnetospirillum magneticum)).